The sequence spans 317 residues: Melanocyte-stimulating hormone receptor (317 aa).

Residues 1–37 (MAVQGFQRRLLGSLNSTPTAIPQLGLAANQTGARCLE) lie on the Extracellular side of the membrane. An N-linked (GlcNAc...) asparagine glycan is attached at N29. The chain crosses the membrane as a helical span at residues 38 to 63 (VSIPDGLFLSLGLVSLVENVLVVATI). The Cytoplasmic segment spans residues 64-72 (AKNRNLHSP). The helical transmembrane segment at 73–93 (TYCFICCLALSDLLVSGGNVL) threads the bilayer. Over 94–118 (ETVVILLLEASALAARAAVVQPLDN) the chain is Extracellular. A helical membrane pass occupies residues 119 to 140 (VIDVITCSSMVSSLCFLGAIAM). Over 141–163 (DRYVSIFYALRYHSIVTLPRARQ) the chain is Cytoplasmic. The helical transmembrane segment at 164 to 183 (AIAAIWVASVLFSTLFIAYY) threads the bilayer. Residues 184-191 (DHAAVLLC) lie on the Extracellular side of the membrane. Residues 192-211 (LVVFFLAMLVLMAVLYVHML) traverse the membrane as a helical segment. Over 212–240 (ARACQHAQGIARLHKRQRPLHQGFGLKGA) the chain is Cytoplasmic. The chain crosses the membrane as a helical span at residues 241 to 266 (VTLTILLGIFFLCWGPFFLHLTLIVL). The Extracellular portion of the chain corresponds to 267–279 (CPQHPTCSCIFKN). A helical membrane pass occupies residues 280 to 300 (FNLFLTLIICNAIIDPLIYAF). The Cytoplasmic portion of the chain corresponds to 301-317 (RRQELRRTLKEGLTCSW). C315 carries the S-palmitoyl cysteine lipid modification.

The protein belongs to the G-protein coupled receptor 1 family. As to quaternary structure, interacts with MGRN1, but does not undergo MGRN1-mediated ubiquitination; this interaction competes with GNAS-binding and thus inhibits agonist-induced cAMP production. Interacts with OPN3; the interaction results in a decrease in MC1R-mediated cAMP signaling and ultimately a decrease in melanin production in melanocytes.

It localises to the cell membrane. Its function is as follows. Receptor for MSH (alpha, beta and gamma) and ACTH. The activity of this receptor is mediated by G proteins which activate adenylate cyclase. Mediates melanogenesis, the production of eumelanin (black/brown) and phaeomelanin (red/yellow), via regulation of cAMP signaling in melanocytes. The sequence is that of Melanocyte-stimulating hormone receptor (MC1R) from Hylobates lar (Lar gibbon).